Reading from the N-terminus, the 1220-residue chain is MRKAGANRNNERQGRNLGQQGPQMSPPGPSMMYPHHHQHQHHHQHQHQHQHQHQHPHQHPHQHHHHHPHHNGVYGNAYDNIRQPQMPPHSFGQGVSGSPWNSPPQQTPMYNQGYNQMSPGTGGGYGDMGGMYRDVHGGQYPSSPSHMGGGANIPYGRNPAMHNGLPAGAPLPGGYGALPHQGAHTPMGFGRGGQPLMEHMQPSGMYGAPMMRHDGYPDTRVSPPAQVGYGAGAPVGPPPPPPMPAGPPYGGVLPGAGVGPGGPMNASRPPAGIGGGGGGGGNAGYLEMRARGMGPQMPASNASRPPRIGTPDPGMMPPNRMNQSPMMGQGLPPQVGNFMPLPGVSPSPHAMIPTTPSMGDTFPGDDANMSGSTEALYDFLHDRGLVSVDNISKFFPEGYGKDDPALKVAVDGNFCLTSLRDELRKRDSLWFLHSTLPEELLMLVQQHVEWMRNMKLEPIWVFNGLSVSGDVETFLTTEAELRARDAVWSKLEDGEIPDEVEIQEAFDQPLGEDVQMAVARYLKEELGVMAVTAPFLNWAQMVAFHKEGIADLLMGPPEMLLLPYDEMKVIVQIDVSNSSVNYLDRDRVLRALFPNHVTETNTRVAGDRLMDLGLITATHAALSSARVTLNLSMQEVYEELSTPTPKFRSIKDFINAHACSQETGKKAGLSIKHSKGRGYLRYSAVFSTKSRDTPLVYLVRVLDPDLTNADMPTNLAGVLGHLVPLSLFYMQFSGLLSVRIMTAITQSYLRDECPVSDTKDYHTTLGLLMTMRSQVIGQILKRIAHPPPIKRTECLSWVRWFQPILAPMDRPRDLIDLDEWEISDSDQLKKLDEDCLADYSIASVLSVTADASRPAVEESNRPAGRVPIRYNSKRETFLAILLKSFDFLGYFSHSTAPNDAVDGMEMECCGMDGHDRGGSVPAAYHEKDLSSMKRSEASDINFMADEGLKDYPSVYFPIYLRATIKANPLDVQASFVLLTELVRVRIINSNPCRYINPANQQVEISMDDQDTNSDSRVLLASRIACLVKLPYRRASENLPFVWAPVYSRHLCAFTVMVRAMCRCLRELVEVITSTVFLSGNSSCSLQDFAEFASILPFGDVPSTIGGLLLHYVLVFPSDYQANLTSREERIEYLQGKFRDIPDLADHLHLVMSFTLQALYLINAYMLNDKETIVAKDQLTGTIVEDTIEMMWQKWRDHIDDNPPGDIHNLYPPRHQEPIPH.

Residues 1–107 (MRKAGANRNN…SPWNSPPQQT (107 aa)) form a disordered region. Over residues 34–70 (PHHHQHQHHHQHQHQHQHQHQHPHQHPHQHHHHHPHH) the composition is skewed to basic residues.

Belongs to the XPG/RAD2 endonuclease family. As to quaternary structure, forms a complex composed of at least MKT1L, PBP1, XAC1 and LSM12.

Its subcellular location is the cytoplasm. In terms of biological role, involved in post-transcriptional regulation of gene expression. In Trypanosoma brucei brucei (strain 927/4 GUTat10.1), this protein is Post-transcriptional regulator MKT1L.